Here is a 192-residue protein sequence, read N- to C-terminus: Probable nicotinate-nucleotide adenylyltransferase (192 aa).

It belongs to the NadD family.

The catalysed reaction is nicotinate beta-D-ribonucleotide + ATP + H(+) = deamido-NAD(+) + diphosphate. It participates in cofactor biosynthesis; NAD(+) biosynthesis; deamido-NAD(+) from nicotinate D-ribonucleotide: step 1/1. In terms of biological role, catalyzes the reversible adenylation of nicotinate mononucleotide (NaMN) to nicotinic acid adenine dinucleotide (NaAD). The chain is Probable nicotinate-nucleotide adenylyltransferase from Rhizobium etli (strain ATCC 51251 / DSM 11541 / JCM 21823 / NBRC 15573 / CFN 42).